A 156-amino-acid polypeptide reads, in one-letter code: ATP synthase subunit b (156 aa).

A helical membrane pass occupies residues 3–23 (ITFTIFAQSLAFAALIWIVAT).

The protein belongs to the ATPase B chain family. F-type ATPases have 2 components, F(1) - the catalytic core - and F(0) - the membrane proton channel. F(1) has five subunits: alpha(3), beta(3), gamma(1), delta(1), epsilon(1). F(0) has three main subunits: a(1), b(2) and c(10-14). The alpha and beta chains form an alternating ring which encloses part of the gamma chain. F(1) is attached to F(0) by a central stalk formed by the gamma and epsilon chains, while a peripheral stalk is formed by the delta and b chains.

It is found in the cell inner membrane. Its function is as follows. F(1)F(0) ATP synthase produces ATP from ADP in the presence of a proton or sodium gradient. F-type ATPases consist of two structural domains, F(1) containing the extramembraneous catalytic core and F(0) containing the membrane proton channel, linked together by a central stalk and a peripheral stalk. During catalysis, ATP synthesis in the catalytic domain of F(1) is coupled via a rotary mechanism of the central stalk subunits to proton translocation. Component of the F(0) channel, it forms part of the peripheral stalk, linking F(1) to F(0). The polypeptide is ATP synthase subunit b (Xylella fastidiosa (strain 9a5c)).